The sequence spans 286 residues: Foldase protein PrsA 1 (286 aa).

Residues 1-18 (MKKAMLALAATSVIALSA) form the signal peptide. The N-palmitoyl cysteine moiety is linked to residue C19. C19 carries the S-diacylglycerol cysteine lipid modification. One can recognise a PpiC domain in the interval 130–220 (KPEIKASHIL…FGYHIIKVTD (91 aa)).

Belongs to the PrsA family.

The protein resides in the cell membrane. The enzyme catalyses [protein]-peptidylproline (omega=180) = [protein]-peptidylproline (omega=0). Its function is as follows. Plays a major role in protein secretion by helping the post-translocational extracellular folding of several secreted proteins. In Bacillus cereus (strain ATCC 14579 / DSM 31 / CCUG 7414 / JCM 2152 / NBRC 15305 / NCIMB 9373 / NCTC 2599 / NRRL B-3711), this protein is Foldase protein PrsA 1 (prsA1).